The following is a 351-amino-acid chain: Soluble interferon alpha/beta receptor OPG204 (351 aa).

An N-terminal signal peptide occupies residues 1–19 (MTMKMMVHIYFVSLLLLLF). 2 Ig-like C2-type domains span residues 65–147 (LGEP…RSHI) and 155–237 (PKTY…IVVS). Intrachain disulfides connect Cys-73/Cys-129 and Cys-172/Cys-221. Residues Asn-117, Asn-182, Asn-261, Asn-269, and Asn-321 are each glycosylated (N-linked (GlcNAc...) asparagine; by host). The region spanning 246–345 (PSQDHRFKLI…HNYYFEKTLT (100 aa)) is the Ig-like V-type domain. A disulfide bridge links Cys-272 with Cys-333.

Belongs to the interleukin-1 receptor family. Interacts with host IFNA1.

It localises to the secreted. Its function is as follows. Counteracts the antiviral effects of host IFN-alpha/beta and key IFN-inducible proteins involved in viral RNA degradation suxh as host OAS1. Acts as a soluble IFN-alpha receptor and thus inhibits the interaction between host IFN-alpha and its receptor. The protein is Soluble interferon alpha/beta receptor OPG204 (OPG204) of Vaccinia virus (strain Western Reserve) (VACV).